The primary structure comprises 254 residues: Transcription factor bHLH51 (254 aa).

Residues 62-111 (SLSRSHRLAEKRRRDRINSHLTALRKLVPNSDKLDKAALLATVIEQVKEL) form the bHLH domain.

Homodimer. In terms of tissue distribution, expressed constitutively in roots, stems, and flowers.

It localises to the nucleus. The chain is Transcription factor bHLH51 (BHLH51) from Arabidopsis thaliana (Mouse-ear cress).